Here is an 85-residue protein sequence, read N- to C-terminus: Large ribosomal subunit protein bL27 (85 aa).

Residues 1–22 (MAHKKGASSTRNGRDSNAQRLG) are disordered. Polar residues predominate over residues 7–19 (ASSTRNGRDSNAQ).

It belongs to the bacterial ribosomal protein bL27 family.

The sequence is that of Large ribosomal subunit protein bL27 from Leifsonia xyli subsp. xyli (strain CTCB07).